The chain runs to 240 residues: Guanylate kinase (240 aa).

In terms of domain architecture, Guanylate kinase-like spans 56–236 (GRIFVITGPS…TLNELKSILL (181 aa)). ATP is bound at residue 63–70 (GPSGVGKS).

This sequence belongs to the guanylate kinase family.

The protein localises to the cytoplasm. The enzyme catalyses GMP + ATP = GDP + ADP. In terms of biological role, essential for recycling GMP and indirectly, cGMP. In Mycoplasma genitalium (strain ATCC 33530 / DSM 19775 / NCTC 10195 / G37) (Mycoplasmoides genitalium), this protein is Guanylate kinase (gmk).